The sequence spans 762 residues: 5-methyltetrahydropteroyltriglutamate--homocysteine methyltransferase (762 aa).

5-methyltetrahydropteroyltri-L-glutamate contacts are provided by residues 17–20 and Lys111; that span reads REWK. Residues 435–437 and Glu488 each bind L-homocysteine; that span reads IGS. L-methionine is bound by residues 435–437 and Glu488; that span reads IGS. 5-methyltetrahydropteroyltri-L-glutamate is bound by residues 519–520 and Trp565; that span reads RC. Asp603 is an L-homocysteine binding site. Asp603 lines the L-methionine pocket. Residue Glu609 participates in 5-methyltetrahydropteroyltri-L-glutamate binding. Zn(2+)-binding residues include His645, Cys647, and Glu669. Catalysis depends on His698, which acts as the Proton donor. Cys730 serves as a coordination point for Zn(2+).

Belongs to the vitamin-B12 independent methionine synthase family. The cofactor is Zn(2+).

The enzyme catalyses 5-methyltetrahydropteroyltri-L-glutamate + L-homocysteine = tetrahydropteroyltri-L-glutamate + L-methionine. The protein operates within amino-acid biosynthesis; L-methionine biosynthesis via de novo pathway; L-methionine from L-homocysteine (MetE route): step 1/1. Catalyzes the transfer of a methyl group from 5-methyltetrahydrofolate to homocysteine resulting in methionine formation. The chain is 5-methyltetrahydropteroyltriglutamate--homocysteine methyltransferase from Bacillus cereus (strain G9842).